The chain runs to 225 residues: Biosynthetic peptidoglycan transglycosylase (225 aa).

Residues 8-28 (VLLIFIGAILLIQLWIFSSLV) traverse the membrane as a helical segment.

It belongs to the glycosyltransferase 51 family.

The protein resides in the cell inner membrane. The enzyme catalyses [GlcNAc-(1-&gt;4)-Mur2Ac(oyl-L-Ala-gamma-D-Glu-L-Lys-D-Ala-D-Ala)](n)-di-trans,octa-cis-undecaprenyl diphosphate + beta-D-GlcNAc-(1-&gt;4)-Mur2Ac(oyl-L-Ala-gamma-D-Glu-L-Lys-D-Ala-D-Ala)-di-trans,octa-cis-undecaprenyl diphosphate = [GlcNAc-(1-&gt;4)-Mur2Ac(oyl-L-Ala-gamma-D-Glu-L-Lys-D-Ala-D-Ala)](n+1)-di-trans,octa-cis-undecaprenyl diphosphate + di-trans,octa-cis-undecaprenyl diphosphate + H(+). It functions in the pathway cell wall biogenesis; peptidoglycan biosynthesis. Functionally, peptidoglycan polymerase that catalyzes glycan chain elongation from lipid-linked precursors. The chain is Biosynthetic peptidoglycan transglycosylase from Acinetobacter baumannii (strain ACICU).